Here is a 167-residue protein sequence, read N- to C-terminus: Signal peptidase complex catalytic subunit SEC11 (167 aa).

Residues 1-6 (MNIRQQ) lie on the Cytoplasmic side of the membrane. The helical; Signal-anchor for type II membrane protein transmembrane segment at 7-24 (LTKFLGLFLTLASAFMFW) threads the bilayer. Residues 25–167 (KGLSVVTNSH…LALSSLLGSE (143 aa)) are Lumenal-facing. Active-site charge relay system residues include Ser44, His83, and Asp109. The tract at residues 153 to 164 (ALMGMLALSSLL) is C-terminal short (CTS) helix.

It belongs to the peptidase S26B family. As to quaternary structure, component of the signal peptidase complex (SPC) composed of a catalytic subunit SEC11 and three accessory subunits SPC1, SPC2 and SPC3. The complex induces a local thinning of the ER membrane which is used to measure the length of the signal peptide (SP) h-region of protein substrates. This ensures the selectivity of the complex towards h-regions shorter than 18-20 amino acids. SPC associates with the translocon complex.

The protein resides in the endoplasmic reticulum membrane. The enzyme catalyses Cleavage of hydrophobic, N-terminal signal or leader sequences from secreted and periplasmic proteins.. Functionally, catalytic component of the signal peptidase complex (SPC) which catalyzes the cleavage of N-terminal signal sequences from nascent proteins as they are translocated into the lumen of the endoplasmic reticulum. Specifically cleaves N-terminal signal peptides that contain a hydrophobic alpha-helix (h-region) shorter than 18-20 amino acids. The chain is Signal peptidase complex catalytic subunit SEC11 (SEC11) from Eremothecium gossypii (strain ATCC 10895 / CBS 109.51 / FGSC 9923 / NRRL Y-1056) (Yeast).